A 618-amino-acid polypeptide reads, in one-letter code: Beta-glucosidase C (618 aa).

The signal sequence occupies residues 1 to 19 (MRVDSTVLALVALATDCLG). Residues N40, N82, N104, N211, and N263 are each glycosylated (N-linked (GlcNAc...) asparagine). Residue D330 is part of the active site. 6 N-linked (GlcNAc...) asparagine glycosylation sites follow: N417, N448, N477, N482, N502, and N517.

This sequence belongs to the glycosyl hydrolase 3 family.

It is found in the secreted. The catalysed reaction is Hydrolysis of terminal, non-reducing beta-D-glucosyl residues with release of beta-D-glucose.. Its pathway is glycan metabolism; cellulose degradation. Its function is as follows. Beta-glucosidases are one of a number of cellulolytic enzymes involved in the degradation of cellulosic biomass. Catalyzes the last step releasing glucose from the inhibitory cellobiose. The protein is Beta-glucosidase C (bglC) of Emericella nidulans (strain FGSC A4 / ATCC 38163 / CBS 112.46 / NRRL 194 / M139) (Aspergillus nidulans).